The sequence spans 318 residues: Methionyl-tRNA formyltransferase (318 aa).

Residue 110–113 (SLLP) coordinates (6S)-5,6,7,8-tetrahydrofolate.

It belongs to the Fmt family.

The catalysed reaction is L-methionyl-tRNA(fMet) + (6R)-10-formyltetrahydrofolate = N-formyl-L-methionyl-tRNA(fMet) + (6S)-5,6,7,8-tetrahydrofolate + H(+). Its function is as follows. Attaches a formyl group to the free amino group of methionyl-tRNA(fMet). The formyl group appears to play a dual role in the initiator identity of N-formylmethionyl-tRNA by promoting its recognition by IF2 and preventing the misappropriation of this tRNA by the elongation apparatus. The chain is Methionyl-tRNA formyltransferase from Ligilactobacillus salivarius (strain UCC118) (Lactobacillus salivarius).